A 374-amino-acid chain; its full sequence is S-adenosylmethionine synthase 2 (374 aa).

A Mg(2+)-binding site is contributed by glutamate 11. Residue histidine 17 participates in ATP binding. Glutamate 45 serves as a coordination point for K(+). The L-methionine site is built by glutamate 58 and glutamine 101. ATP contacts are provided by residues 169 to 171 (DGK), 237 to 240 (SGRF), aspartate 248, 254 to 255 (RK), alanine 271, lysine 275, and lysine 279. Residue aspartate 248 participates in L-methionine binding. Lysine 279 provides a ligand contact to L-methionine.

Belongs to the AdoMet synthase family. Homotetramer. It depends on Mn(2+) as a cofactor. Requires Mg(2+) as cofactor. Co(2+) serves as cofactor. K(+) is required as a cofactor. As to expression, expressed in vegetative and reproductive tissues.

Its subcellular location is the cytoplasm. It carries out the reaction L-methionine + ATP + H2O = S-adenosyl-L-methionine + phosphate + diphosphate. It functions in the pathway amino-acid biosynthesis; S-adenosyl-L-methionine biosynthesis; S-adenosyl-L-methionine from L-methionine: step 1/1. In terms of biological role, catalyzes the formation of S-adenosylmethionine from methionine and ATP. The reaction comprises two steps that are both catalyzed by the same enzyme: formation of S-adenosylmethionine (AdoMet) and triphosphate, and subsequent hydrolysis of the triphosphate. The protein is S-adenosylmethionine synthase 2 (SAMS2) of Pisum sativum (Garden pea).